The chain runs to 452 residues: Golgi reassembly-stacking protein 2 (452 aa).

G2 carries N-myristoyl glycine lipidation. PDZ GRASP-type domains lie at 15–105 (EGYH…FCSF) and 111–199 (NVWH…YGYL). The interval 15-215 (EGYHVLRVQE…PFEEGKKISL (201 aa)) is GRASP. 2 positions are modified to dimethylated arginine: R30 and R47. An important for membrane binding region spans residues 194–199 (IGYGYL). The residue at position 214 (S214) is a Phosphoserine. Phosphothreonine occurs at positions 222 and 225. The segment covering 372–424 (PESSSAASSGELLSSLPPTSNAPSDPATTTAKADAASSLTVDVTPPTAKAPTT) has biased composition (low complexity). The segment at 372–452 (PESSSAASSG…AVDANASESP (81 aa)) is disordered. Phosphoserine is present on S409. Phosphothreonine occurs at positions 415 and 433. Residues S436, S441, S449, and S451 each carry the phosphoserine modification.

Belongs to the GORASP family. In terms of assembly, homodimer. Homooligomer. ER stress induces phosphorylation-dependent monomerization. Interacts with BLZF1/Golgin 45. Identified in a complex with RAB2 and GORASP2. Interacts with JAM2 and JAM3. Interacts with members of the p24 cargo receptors. Interacts with CNIH1 and the cytoplasmic domain of transmembrane TGFA, prior its transit in the trans-Golgi. Interacts with KCTD5. Interacts with TMED2 and TMED3. Interacts with SEC16A in response to ER stress. Interacts (via PDZ GRASP-type 1 domain) with core-glycosylated CFTR in response to ER stress. In terms of processing, myristoylated. Myristoylation is essential for the Golgi targeting. Post-translationally, palmitoylated. Phosphorylated in mitotic cells. ER stress-induced phosphorylation at Ser-441 induces monomerization and subsequent relocalization from Golgi to ER which is essential for mediating unconventional (ER/Golgi-independent) trafficking of CFTR to the cell membrane.

It is found in the golgi apparatus membrane. The protein localises to the endoplasmic reticulum membrane. It localises to the golgi apparatus. Its function is as follows. Key structural protein of the Golgi apparatus. The membrane cisternae of the Golgi apparatus adhere to each other to form stacks, which are aligned side by side to form the Golgi ribbon. Acting in concert with GORASP1/GRASP65, is required for the formation and maintenance of the Golgi ribbon, and may be dispensable for the formation of stacks. However, other studies suggest that GORASP2 plays a role in the assembly and membrane stacking of the Golgi cisternae, and in the process by which Golgi stacks reform after breakdown during mitosis and meiosis. May regulate the intracellular transport and presentation of a defined set of transmembrane proteins, such as transmembrane TGFA. Required for normal acrosome formation during spermiogenesis and normal male fertility, probably by promoting colocalization of JAM2 and JAM3 at contact sites between germ cells and Sertoli cells. Mediates ER stress-induced unconventional (ER/Golgi-independent) trafficking of core-glycosylated CFTR to cell membrane. The sequence is that of Golgi reassembly-stacking protein 2 (GORASP2) from Homo sapiens (Human).